A 71-amino-acid polypeptide reads, in one-letter code: Exodeoxyribonuclease 7 small subunit (71 aa).

This sequence belongs to the XseB family. Heterooligomer composed of large and small subunits.

The protein resides in the cytoplasm. It catalyses the reaction Exonucleolytic cleavage in either 5'- to 3'- or 3'- to 5'-direction to yield nucleoside 5'-phosphates.. In terms of biological role, bidirectionally degrades single-stranded DNA into large acid-insoluble oligonucleotides, which are then degraded further into small acid-soluble oligonucleotides. In Streptococcus pyogenes serotype M1, this protein is Exodeoxyribonuclease 7 small subunit.